Reading from the N-terminus, the 302-residue chain is Deoxyhypusine hydroxylase-B (302 aa).

5 HEAT-like PBS-type repeats span residues 49 to 75, 82 to 108, 171 to 200, 204 to 230, and 237 to 263; these read LAHE…VLKD, VRHE…SLAV, MYER…LGVK, LRHE…VLKN, and VRHE…FAKD. The Fe cation site is built by histidine 51, glutamate 52, histidine 84, and glutamate 85. Fe cation is bound by residues histidine 206, glutamate 207, histidine 239, and glutamate 240.

It belongs to the deoxyhypusine hydroxylase family. The cofactor is Fe(2+).

It carries out the reaction [eIF5A protein]-deoxyhypusine + AH2 + O2 = [eIF5A protein]-hypusine + A + H2O. It participates in protein modification; eIF5A hypusination. Catalyzes the hydroxylation of the N(6)-(4-aminobutyl)-L-lysine intermediate to form hypusine, an essential post-translational modification only found in mature eIF-5A factor. The sequence is that of Deoxyhypusine hydroxylase-B from Oryza sativa subsp. japonica (Rice).